A 386-amino-acid polypeptide reads, in one-letter code: GTPase Obg (386 aa).

The Obg domain occupies 1 to 159 (MKFVDEAVIR…RSLKLELMLL (159 aa)). One can recognise an OBG-type G domain in the interval 160–333 (ADVGLLGMPN…LSLKLVDFID (174 aa)). Residues 166–173 (GMPNAGKS), 191–195 (FTTLV), 213–216 (DIPG), 283–286 (NKKD), and 314–316 (SAY) each bind GTP. 2 residues coordinate Mg(2+): S173 and T193. The disordered stretch occupies residues 356–375 (KDSDSLNEDFDDSDDDDFDD). Acidic residues predominate over residues 360–375 (SLNEDFDDSDDDDFDD).

The protein belongs to the TRAFAC class OBG-HflX-like GTPase superfamily. OBG GTPase family. As to quaternary structure, monomer. The cofactor is Mg(2+).

Its subcellular location is the cytoplasm. In terms of biological role, an essential GTPase which binds GTP, GDP and possibly (p)ppGpp with moderate affinity, with high nucleotide exchange rates and a fairly low GTP hydrolysis rate. Plays a role in control of the cell cycle, stress response, ribosome biogenesis and in those bacteria that undergo differentiation, in morphogenesis control. The polypeptide is GTPase Obg (Shewanella sediminis (strain HAW-EB3)).